A 276-amino-acid chain; its full sequence is Elongation factor Ts, mitochondrial (276 aa).

Belongs to the EF-Ts family.

The protein resides in the mitochondrion. Associates with the EF-Tu.GDP complex and induces the exchange of GDP to GTP. It remains bound to the aminoacyl-tRNA.EF-Tu.GTP complex up to the GTP hydrolysis stage on the ribosome. The polypeptide is Elongation factor Ts, mitochondrial (Leishmania braziliensis).